The following is a 307-amino-acid chain: uncharacterized protein (307 aa).

The 254-residue stretch at 54-307 (RHYLSTSMRV…KALPVDFFRE (254 aa)) folds into the EAL domain. Transmembrane regions (helical) follow at residues 158-178 (PGFL…AHAL) and 203-223 (ALGV…LAYL).

It is found in the cell membrane. This is an uncharacterized protein from Mycobacterium tuberculosis (strain CDC 1551 / Oshkosh).